A 327-amino-acid chain; its full sequence is Clavesin-2 (327 aa).

In terms of domain architecture, CRAL-TRIO spans 96–257 (IKQALKDGFP…EFGGMLPPYD (162 aa)). The tract at residues 289 to 327 (DKELSPKSMKRSQSVVDPTALKRMDKSEEENMQPLLALD) is disordered.

As to quaternary structure, forms a complex with clathrin heavy chain and gamma-adaptin.

The protein resides in the golgi apparatus. Its subcellular location is the trans-Golgi network membrane. It localises to the early endosome membrane. It is found in the cytoplasmic vesicle. The protein localises to the clathrin-coated vesicle. In terms of biological role, required for normal morphology of late endosomes and/or lysosomes in neurons. Binds phosphatidylinositol 3,5-bisphosphate (PtdIns(3,5)P2). This chain is Clavesin-2 (Clvs2), found in Mus musculus (Mouse).